Reading from the N-terminus, the 935-residue chain is Coiled-coil domain-containing protein 66 (935 aa).

Over residues 76–96 (LDTSQAKPENSRLTFSPSTDK) the composition is skewed to polar residues. Residues 76-103 (LDTSQAKPENSRLTFSPSTDKQYSEKDS) are disordered. At Thr114 the chain carries Phosphothreonine. At Ser366 the chain carries Phosphoserine. A coiled-coil region spans residues 462 to 555 (LEHQKAIMAQ…EQRIRELAQK (94 aa)). Disordered stretches follow at residues 470–491 (AQVEENRRKKRLEEEQRKKEEQ), 577–602 (TISSSHSDPEETADTSTASPKKDTGV), and 738–794 (ENLS…RTQQ). A compositionally biased stretch (basic and acidic residues) spans 473 to 491 (EENRRKKRLEEEQRKKEEQ). The interval 567–935 (GAQVDYKAFT…NQEDNFSSSF (369 aa)) is mediates localization to cilia, centrosomes and spindle microtubules and the interaction with PCM1, CEP290, CEP104 and CSPP1. A compositionally biased stretch (polar residues) spans 590-602 (DTSTASPKKDTGV). Ser595 is subject to Phosphoserine. The span at 752–782 (SHRETESESRLHLIKKVEEPLKTPSVSKERF) shows a compositional bias: basic and acidic residues. Over residues 783 to 794 (QTSPAVKNRTQQ) the composition is skewed to polar residues.

Homodimer; disulfide-linked. Interacts with CEP290. Interacts with PCM1. Interacts with ARMC9, TOGARAM1, CSPP1 and CEP104. Interacts with CDK5RAP2, CEP152, CEP192, TBG1 and PRC1. As to expression, widely expressed. Expressed in retina by rod photoreceptors but also detected in outer plexiform and ganglion cell layers (at protein level).

The protein resides in the cytoplasm. The protein localises to the cytoskeleton. It is found in the microtubule organizing center. It localises to the centrosome. Its subcellular location is the centriolar satellite. The protein resides in the cell projection. The protein localises to the cilium. It is found in the cilium basal body. It localises to the cilium axoneme. Its subcellular location is the photoreceptor inner segment. The protein resides in the photoreceptor outer segment. In terms of biological role, microtubule-binding protein required for ciliogenesis. May function in ciliogenesis by mediating the transport of proteins like BBS4 to the cilium, but also through the organization of the centriolar satellites. Required for the assembly of signaling-competent cilia with proper structure and length. Mediates this function in part by regulating transition zone assembly and basal body recruitment of the IFT-B complex. Cooperates with the ciliopathy proteins CSPP1 and CEP104 during cilium length regulation. Plays two important roles during cell division. First, is required for mitotic progression via regulation of spindle assembly, organization and orientation, levels of spindle microtubules (MTs), kinetochore-fiber integrity, and chromosome alignment. Second, functions during cytokinesis in part by regulating assembly and organization of central spindle and midbody MTs. Plays a role in retina morphogenesis and/or homeostasis. The chain is Coiled-coil domain-containing protein 66 from Mus musculus (Mouse).